Here is a 120-residue protein sequence, read N- to C-terminus: Large ribosomal subunit protein uL18 (120 aa).

It belongs to the universal ribosomal protein uL18 family. As to quaternary structure, part of the 50S ribosomal subunit; part of the 5S rRNA/L5/L18/L25 subcomplex. Contacts the 5S and 23S rRNAs.

Functionally, this is one of the proteins that bind and probably mediate the attachment of the 5S RNA into the large ribosomal subunit, where it forms part of the central protuberance. The chain is Large ribosomal subunit protein uL18 from Brevibacillus brevis (strain 47 / JCM 6285 / NBRC 100599).